The sequence spans 318 residues: Thioredoxin reductase (318 aa).

36 to 43 (TGMQQGGQ) is a binding site for FAD. A disulfide bridge links Cys-136 with Cys-139. 286 to 295 (DVMDHNYRQA) serves as a coordination point for FAD.

The protein belongs to the class-II pyridine nucleotide-disulfide oxidoreductase family. As to quaternary structure, homodimer. FAD serves as cofactor.

Its subcellular location is the cytoplasm. It catalyses the reaction [thioredoxin]-dithiol + NADP(+) = [thioredoxin]-disulfide + NADPH + H(+). This is Thioredoxin reductase (trxB) from Vibrio cholerae serotype O1 (strain ATCC 39315 / El Tor Inaba N16961).